The chain runs to 477 residues: Glycogen synthase (477 aa).

K15 contacts ADP-alpha-D-glucose.

The protein belongs to the glycosyltransferase 1 family. Bacterial/plant glycogen synthase subfamily.

The catalysed reaction is [(1-&gt;4)-alpha-D-glucosyl](n) + ADP-alpha-D-glucose = [(1-&gt;4)-alpha-D-glucosyl](n+1) + ADP + H(+). It participates in glycan biosynthesis; glycogen biosynthesis. Its function is as follows. Synthesizes alpha-1,4-glucan chains using ADP-glucose. In Edwardsiella ictaluri (strain 93-146), this protein is Glycogen synthase.